The primary structure comprises 662 residues: Mitochondrial Rho GTPase 1 (662 aa).

Residues 1-634 (MTKETIRVVI…AKDVDYRQTA (634 aa)) are Cytoplasmic-facing. One can recognise a Miro 1 domain in the interval 3-185 (KETIRVVICG…FYLCQRAITH (183 aa)). GTP-binding positions include 12 to 19 (GDEGVGKS), 62 to 64 (DTS), and 116 to 119 (NKCD). 2 EF-hand domains span residues 201 to 236 (LAVM…CFNK) and 330 to 365 (KGYR…TPGL). Residues Asp-214, Asn-216, Asp-218, Tyr-220, Glu-225, Asp-343, Asp-345, Asp-347, and Glu-354 each contribute to the Ca(2+) site. The Miro 2 domain occupies 446 to 611 (RKVFNCFVIG…FIKITEAALD (166 aa)). GTP contacts are provided by residues 455–462 (GKPCCGKS), 491–495 (ELKGG), and 560–563 (SKAD). A helical; Anchor for type IV membrane protein membrane pass occupies residues 635–655 (LIFGSTVGFVALCSFTLMKLF). The Mitochondrial intermembrane portion of the chain corresponds to 656-662 (KSSKFSK).

This sequence belongs to the mitochondrial Rho GTPase family.

The protein resides in the mitochondrion outer membrane. Functionally, mitochondrial GTPase involved in mitochondrial trafficking. Probably involved in control of anterograde transport of mitochondria and their subcellular distribution. The polypeptide is Mitochondrial Rho GTPase 1 (GEM1) (Saccharomyces cerevisiae (strain ATCC 204508 / S288c) (Baker's yeast)).